The sequence spans 257 residues: Hydroxyethylthiazole kinase (257 aa).

M49 serves as a coordination point for substrate. R124 and T170 together coordinate ATP. G197 lines the substrate pocket.

Belongs to the Thz kinase family. Mg(2+) is required as a cofactor.

It catalyses the reaction 5-(2-hydroxyethyl)-4-methylthiazole + ATP = 4-methyl-5-(2-phosphooxyethyl)-thiazole + ADP + H(+). Its pathway is cofactor biosynthesis; thiamine diphosphate biosynthesis; 4-methyl-5-(2-phosphoethyl)-thiazole from 5-(2-hydroxyethyl)-4-methylthiazole: step 1/1. Functionally, catalyzes the phosphorylation of the hydroxyl group of 4-methyl-5-beta-hydroxyethylthiazole (THZ). The polypeptide is Hydroxyethylthiazole kinase (Klebsiella pneumoniae subsp. pneumoniae (strain ATCC 700721 / MGH 78578)).